The sequence spans 472 residues: CAAX prenyl protease 1 homolog (472 aa).

Over 1 to 8 (MDVGGALD) the chain is Lumenal. A helical membrane pass occupies residues 9–29 (LYGCSVNVYNAILIFIWVLFL). The Cytoplasmic segment spans residues 30–75 (WETYINLRQLKVAKRVTESPEEIKCLMNDVDFDKSRRYAIDKMNFD). A helical transmembrane segment spans residues 76–96 (IVSGFYNILSLSAVLYFQLIA). The Lumenal portion of the chain corresponds to 97–124 (WAWHKSQEHMLFVCSYAPRSFGTTEGSE). A helical membrane pass occupies residues 125–145 (ILFSLLFTVYVALFQFFESLP). The Cytoplasmic segment spans residues 146 to 175 (WSYYRHFVIEERYGFNKQTIGFFIKDRLKS). The helical transmembrane segment at 176 to 196 (LAVGLVIGLPIISMLVWIIKA) threads the bilayer. Over 197-207 (GGHYFYIYAYG) the chain is Lumenal. The helical transmembrane segment at 208 to 228 (FTFVVSFIIMFIYPEFIAPIF) threads the bilayer. The Cytoplasmic portion of the chain corresponds to 229-340 (DRYEHFPDCE…LGHWKLKHMT (112 aa)). H329 is a Zn(2+) binding site. E330 is an active-site residue. A Zn(2+)-binding site is contributed by H333. A helical membrane pass occupies residues 341–361 (FNLIIAQINIFFMFFAFGQLI). Residues 362 to 382 (NVDQLFVDFGFPPSTAPILIR) lie on the Lumenal side of the membrane. The helical transmembrane segment at 383 to 403 (LIVVFQFIFMPYSSVLEFLMT) threads the bilayer. Over 404–472 (MLSRKFEFQA…AIDAKMGKEK (69 aa)) the chain is Cytoplasmic. E410 lines the Zn(2+) pocket. The active-site Proton donor is D414.

Belongs to the peptidase M48A family. Homodimer; disulfide-linked. Zn(2+) serves as cofactor.

It localises to the endoplasmic reticulum membrane. It catalyses the reaction Hydrolyzes the peptide bond -P2-(S-farnesyl or geranylgeranyl)C-P1'-P2'-P3'-COOH where P1' and P2' are amino acids with aliphatic side chains and P3' is any C-terminal residue.. With respect to regulation, inhibited by ethylenediaminetetraacetic acid (EDTA) but not by serine, aspartic or cysteine protease inhibitors. Inhibited by high concentration of Zn(2+) (&gt; 0.1 mM). Zinc-dependent metalloproteinase. Proteolytically removes the C-terminal three residues of farnesylated proteins. This Taenia solium (Pork tapeworm) protein is CAAX prenyl protease 1 homolog.